The sequence spans 400 residues: Argininosuccinate synthase (400 aa).

Residue 8–16 (AYSGGLDTS) coordinates ATP. Residue Tyr-87 participates in L-citrulline binding. Gly-117 contributes to the ATP binding site. The L-aspartate site is built by Thr-119, Asn-123, and Asp-124. Asn-123 contributes to the L-citrulline binding site. L-citrulline contacts are provided by Arg-127, Ser-175, Glu-260, and Tyr-272.

This sequence belongs to the argininosuccinate synthase family. Type 1 subfamily. Homotetramer.

The protein resides in the cytoplasm. It catalyses the reaction L-citrulline + L-aspartate + ATP = 2-(N(omega)-L-arginino)succinate + AMP + diphosphate + H(+). It functions in the pathway amino-acid biosynthesis; L-arginine biosynthesis; L-arginine from L-ornithine and carbamoyl phosphate: step 2/3. The chain is Argininosuccinate synthase from Mycobacterium sp. (strain JLS).